The primary structure comprises 192 residues: dCTP deaminase, dUMP-forming (192 aa).

DCTP is bound by residues 101-106 (KSSLGR), D119, 127-129 (TLE), Q148, Y162, and Q174. The Proton donor/acceptor role is filled by E129. Residues 169 to 192 (SRYQGQRGPTPSRSWQSWRTWPTR) are disordered. Positions 171–192 (YQGQRGPTPSRSWQSWRTWPTR) are enriched in polar residues.

The protein belongs to the dCTP deaminase family. In terms of assembly, homotrimer.

It catalyses the reaction dCTP + 2 H2O = dUMP + NH4(+) + diphosphate. Its pathway is pyrimidine metabolism; dUMP biosynthesis; dUMP from dCTP: step 1/1. Its function is as follows. Bifunctional enzyme that catalyzes both the deamination of dCTP to dUTP and the hydrolysis of dUTP to dUMP without releasing the toxic dUTP intermediate. In Salinispora tropica (strain ATCC BAA-916 / DSM 44818 / JCM 13857 / NBRC 105044 / CNB-440), this protein is dCTP deaminase, dUMP-forming.